Reading from the N-terminus, the 580-residue chain is Dihydroxy-acid dehydratase (580 aa).

Residue aspartate 95 participates in Mg(2+) binding. Cysteine 136 provides a ligand contact to [2Fe-2S] cluster. Aspartate 137 and lysine 138 together coordinate Mg(2+). Lysine 138 is subject to N6-carboxylysine. Cysteine 209 provides a ligand contact to [2Fe-2S] cluster. Mg(2+) is bound at residue glutamate 462. The active-site Proton acceptor is the serine 488.

It belongs to the IlvD/Edd family. Homodimer. Requires [2Fe-2S] cluster as cofactor. Mg(2+) serves as cofactor.

It catalyses the reaction (2R)-2,3-dihydroxy-3-methylbutanoate = 3-methyl-2-oxobutanoate + H2O. It carries out the reaction (2R,3R)-2,3-dihydroxy-3-methylpentanoate = (S)-3-methyl-2-oxopentanoate + H2O. Its pathway is amino-acid biosynthesis; L-isoleucine biosynthesis; L-isoleucine from 2-oxobutanoate: step 3/4. It functions in the pathway amino-acid biosynthesis; L-valine biosynthesis; L-valine from pyruvate: step 3/4. In terms of biological role, functions in the biosynthesis of branched-chain amino acids. Catalyzes the dehydration of (2R,3R)-2,3-dihydroxy-3-methylpentanoate (2,3-dihydroxy-3-methylvalerate) into 2-oxo-3-methylpentanoate (2-oxo-3-methylvalerate) and of (2R)-2,3-dihydroxy-3-methylbutanoate (2,3-dihydroxyisovalerate) into 2-oxo-3-methylbutanoate (2-oxoisovalerate), the penultimate precursor to L-isoleucine and L-valine, respectively. This chain is Dihydroxy-acid dehydratase, found in Leuconostoc mesenteroides subsp. mesenteroides (strain ATCC 8293 / DSM 20343 / BCRC 11652 / CCM 1803 / JCM 6124 / NCDO 523 / NBRC 100496 / NCIMB 8023 / NCTC 12954 / NRRL B-1118 / 37Y).